Reading from the N-terminus, the 498-residue chain is Galactose-1-phosphate uridylyltransferase (498 aa).

It belongs to the galactose-1-phosphate uridylyltransferase type 2 family.

The protein resides in the cytoplasm. It catalyses the reaction alpha-D-galactose 1-phosphate + UDP-alpha-D-glucose = alpha-D-glucose 1-phosphate + UDP-alpha-D-galactose. Its pathway is carbohydrate metabolism; galactose metabolism. This chain is Galactose-1-phosphate uridylyltransferase, found in Clostridium perfringens (strain 13 / Type A).